A 674-amino-acid polypeptide reads, in one-letter code: Methionine--tRNA ligase (674 aa).

The 'HIGH' region signature appears at 11–21 (PYANGDLHLGH). Cysteine 142, cysteine 145, cysteine 155, and cysteine 158 together coordinate Zn(2+). Positions 330-334 (KMSKS) match the 'KMSKS' region motif. Lysine 333 is a binding site for ATP. Positions 574 to 674 (DFMKVDLRIA…EGAQPGMRVK (101 aa)) constitute a tRNA-binding domain.

It belongs to the class-I aminoacyl-tRNA synthetase family. MetG type 1 subfamily. Homodimer. Requires Zn(2+) as cofactor.

It localises to the cytoplasm. The enzyme catalyses tRNA(Met) + L-methionine + ATP = L-methionyl-tRNA(Met) + AMP + diphosphate. Is required not only for elongation of protein synthesis but also for the initiation of all mRNA translation through initiator tRNA(fMet) aminoacylation. The sequence is that of Methionine--tRNA ligase from Francisella tularensis subsp. tularensis (strain WY96-3418).